A 176-amino-acid polypeptide reads, in one-letter code: Inorganic pyrophosphatase (176 aa).

Residues Lys30, Arg44, and Tyr56 each coordinate substrate. Mg(2+) contacts are provided by Asp66, Asp71, and Asp103. Tyr140 lines the substrate pocket.

It belongs to the PPase family. In terms of assembly, homohexamer. Mg(2+) serves as cofactor.

It localises to the cytoplasm. It carries out the reaction diphosphate + H2O = 2 phosphate + H(+). Its function is as follows. Catalyzes the hydrolysis of inorganic pyrophosphate (PPi) forming two phosphate ions. The chain is Inorganic pyrophosphatase from Methanothermobacter thermautotrophicus (strain ATCC 29096 / DSM 1053 / JCM 10044 / NBRC 100330 / Delta H) (Methanobacterium thermoautotrophicum).